Consider the following 621-residue polypeptide: GPI-anchor transamidase component GPAA1 (621 aa).

Residues 1-19 (MGLLSDPVRRRALARIVLR) lie on the Cytoplasmic side of the membrane. Residues 20–41 (LNTPLCVLSYVAGIAWFLALAF) traverse the membrane as a helical segment. Residues 42-370 (PPLTQRTYMS…LLPALSRFVS (329 aa)) are Lumenal-facing. The a 2-acyl-6-[6-phosphoethanolamine-alpha-D-mannosyl-(1-&gt;2)-6-phosphoethanolamine-alpha-D-mannosyl-(1-&gt;6)-2-phosphoethanolamine-alpha-D-mannosyl-(1-&gt;4)-alpha-D-glucosaminyl]-1-(1-radyl,2-acyl-sn-glycero-3-phospho)-1D-myo-inositol site is built by Tyr-49 and Ser-51. N-linked (GlcNAc...) asparagine glycosylation is present at Asn-203. A disulfide bridge connects residues Cys-259 and Cys-266. 3 residues coordinate a 2-acyl-6-[6-phosphoethanolamine-alpha-D-mannosyl-(1-&gt;2)-6-phosphoethanolamine-alpha-D-mannosyl-(1-&gt;6)-2-phosphoethanolamine-alpha-D-mannosyl-(1-&gt;4)-alpha-D-glucosaminyl]-1-(1-radyl,2-acyl-sn-glycero-3-phospho)-1D-myo-inositol: His-354, Gln-355, and Ser-356. Gln-355 provides a ligand contact to Mg(2+). Residues 371-393 (IGLYMPATGFLLLVLGLKALELW) form a helical membrane-spanning segment. Topologically, residues 394-425 (MQLHQAGVNPEEAGKAPSPGTPLLPTQGVGLA) are cytoplasmic. The chain crosses the membrane as a helical span at residues 426–450 (SLTAPLLISQAMGLALYFLPVLGQH). At 451–462 (LATQHFPVAEAE) the chain is on the lumenal side. Residues 463-483 (AVVLTLLAIYVAGLALPHNTH) traverse the membrane as a helical segment. Over 484-495 (RVVNSQVPDRGW) the chain is Cytoplasmic. Transmembrane regions (helical) follow at residues 496–519 (MALK…LNFS) and 520–536 (LGFL…ALAK). The Cytoplasmic segment spans residues 537–540 (PHGP). A helical membrane pass occupies residues 541-563 (RTLYAALLVVTSPAVTLFGSLFL). The Lumenal portion of the chain corresponds to 564–597 (WRELLEVPLSLAEGWQLFLTALAQGVLEHYTYGA). The helical transmembrane segment at 598–619 (LLFPILALGLYPCWLLFWNVLF) threads the bilayer. Topologically, residues 620–621 (WK) are cytoplasmic.

Heteropentamer. Part of the GPI-anchor transamidase complex, consisting of PIGK, PIGT, PIGS, PIGU and GAA1. Interacts with PIGK. Ubiquitously expressed in fetal and adult tissues. Expressed at higher levels in fetal tissues than adult tissues. In embryos abundant in the choroid plexus, skeletal muscle,.

The protein resides in the endoplasmic reticulum membrane. Its pathway is glycolipid biosynthesis; glycosylphosphatidylinositol-anchor biosynthesis. Its function is as follows. Component of the glycosylphosphatidylinositol-anchor (GPI-anchor) transamidase (GPI-T) complex that catalyzes the formation of the linkage between a proprotein and a GPI-anchor and participates in GPI anchored protein biosynthesis. Binds GPI-anchor. In Mus musculus (Mouse), this protein is GPI-anchor transamidase component GPAA1.